We begin with the raw amino-acid sequence, 196 residues long: Retinol-binding protein 4 (196 aa).

Residues 1-21 form the signal peptide; sequence MAYTWRALLLLALAFLGSSMA. Intrachain disulfides connect Cys25/Cys181, Cys91/Cys195, and Cys141/Cys150. Position 119 (Gln119) interacts with substrate.

Belongs to the calycin superfamily. Lipocalin family. As to quaternary structure, interacts with TTR. Interaction with TTR prevents its loss by filtration through the kidney glomeruli. Interacts with STRA6.

Its subcellular location is the secreted. Its function is as follows. Retinol-binding protein that mediates retinol transport in blood plasma. Delivers retinol from the liver stores to the peripheral tissues. Transfers the bound all-trans retinol to STRA6, that then facilitates retinol transport across the cell membrane. The sequence is that of Retinol-binding protein 4 (RBP4) from Gallus gallus (Chicken).